Reading from the N-terminus, the 275-residue chain is Transcriptional coregulator psa-3 (275 aa).

The MEIS N-terminal domain occupies Thr91–Val161. The disordered stretch occupies residues Gln239 to Asp275. The span at Ser248 to Gln262 shows a compositional bias: basic and acidic residues. Positions Lys263–Asp275 are enriched in low complexity.

As to quaternary structure, interacts with homeobox protein ceh-20; the interaction is direct, facilitates nuclear localization of ceh-20 and may stabilize interaction of a ceh-20-nob-1 complex with DNA.

It is found in the nucleus. Probable transcription coregulator. Required for asymmetric cell divisions of the T hypodermal cells, and cell fate determination, in concert with homeobox proteins nob-1 and ceh-20. Acts downstream of the Wnt signaling pathway, and of ceh-20 and nob-1. The sequence is that of Transcriptional coregulator psa-3 from Caenorhabditis elegans.